Here is a 373-residue protein sequence, read N- to C-terminus: Histidinol-phosphate aminotransferase (373 aa).

The residue at position 233 (K233) is an N6-(pyridoxal phosphate)lysine.

It belongs to the class-II pyridoxal-phosphate-dependent aminotransferase family. Histidinol-phosphate aminotransferase subfamily. As to quaternary structure, homodimer. Requires pyridoxal 5'-phosphate as cofactor.

It catalyses the reaction L-histidinol phosphate + 2-oxoglutarate = 3-(imidazol-4-yl)-2-oxopropyl phosphate + L-glutamate. It functions in the pathway amino-acid biosynthesis; L-histidine biosynthesis; L-histidine from 5-phospho-alpha-D-ribose 1-diphosphate: step 7/9. This is Histidinol-phosphate aminotransferase from Nitratidesulfovibrio vulgaris (strain ATCC 29579 / DSM 644 / CCUG 34227 / NCIMB 8303 / VKM B-1760 / Hildenborough) (Desulfovibrio vulgaris).